We begin with the raw amino-acid sequence, 697 residues long: Envelope glycoprotein G (697 aa).

An N-terminal signal peptide occupies residues 1–22; that stretch reads MHAIAPRLLLLFVLSGLPGTRG. The Virion surface segment spans residues 23–648; that stretch reads GSGVPGPINP…WFLTASPALD (626 aa). Asn-104 and Asn-163 each carry an N-linked (GlcNAc...) asparagine; by host glycan. 2 disordered regions span residues 298 to 389 and 402 to 630; these read HWAP…TTPP and TPEE…PSGP. Positions 322-335 are enriched in basic and acidic residues; that stretch reads LRTDPEGVDPDVRA. Composition is skewed to low complexity over residues 375–389 and 402–445; these read DPSA…TTPP and TPEE…AKTP. N-linked (GlcNAc...) asparagine; by host glycosylation is present at Asn-435. Pro residues-rich tracts occupy residues 446–457 and 465–480; these read PTTPAPTTPPPT and PTTP…PATP. A compositionally biased stretch (low complexity) spans 481–529; the sequence is GPVGASAAPTADSPLTALPPATAPGPSAANVSVAATTATPGTRGTARTP. An N-linked (GlcNAc...) asparagine; by host glycan is attached at Asn-510. A compositionally biased stretch (pro residues) spans 542–552; that stretch reads DAPPGSPAPPP. The span at 560–576 shows a compositional bias: acidic residues; the sequence is EEFEGAGDGEPPEDDDS. Residues 587–603 are compositionally biased toward pro residues; that stretch reads PNKPPPARPGPIRPTLP. Residues 649 to 669 form a helical membrane-spanning segment; sequence ILFIISTTIHTAAFVCLVALA. Topologically, residues 670-697 are intravirion; that stretch reads AQLWRGRAGRRRYAHPSVRYVCLPPERD.

The protein belongs to the alphaherpesvirinae glycoprotein G family.

Its subcellular location is the virion membrane. In terms of biological role, chemokine-binding protein that inhibits neutrophils' chemotaxis. The polypeptide is Envelope glycoprotein G (gG) (Homo sapiens (Human)).